A 1388-amino-acid chain; its full sequence is Rho-associated protein kinase 2 (1388 aa).

The tract at residues 1-24 (MSRPPPTGKMPGAPEAAAGDGAGA) is disordered. The 263-residue stretch at 92–354 (YDVVKVIGRG…VEEIKSASFF (263 aa)) folds into the Protein kinase domain. Residues 98-106 (IGRGAFGEV) and K121 contribute to the ATP site. The active-site Proton acceptor is D214. The region spanning 357 to 425 (DQWNWDNIRE…FRENLLLSDS (69 aa)) is the AGC-kinase C-terminal domain. The segment at 363-784 (NIRETAAPVV…LNELLKQKDV (422 aa)) is interaction with PPP1R12A. The segment at 373–420 (PELSSDIDSSNFDDIEDDKGDVETFPIPKAFVGNQLPFIGFTYFRENL) is interaction with NPM1. T414 bears the Phosphothreonine; by ROCK2 mark. 2 coiled-coil regions span residues 439 to 1024 (SEES…EKQL) and 1052 to 1131 (SDTD…IGMD). The region spanning 497-573 (TLRQLEREKA…LDEANALLRT (77 aa)) is the REM-1 domain. The segment covering 513 to 530 (AEYQRKADHEADKKRNLE) has biased composition (basic and acidic residues). Residues 513–532 (AEYQRKADHEADKKRNLEND) form a disordered region. Y722 bears the Phosphotyrosine; by SRC mark. Positions 979-1047 (TSDVANLANE…LAEIMNRKEP (69 aa)) constitute a RhoBD domain. The interval 979 to 1047 (TSDVANLANE…LAEIMNRKEP (69 aa)) is RHOA binding. Residue S1137 is modified to Phosphoserine. In terms of domain architecture, PH spans 1150–1349 (ESRLEGWLSL…WVSRLVKKIP (200 aa)). The residue at position 1212 (T1212) is a Phosphothreonine. A Phorbol-ester/DAG-type zinc finger spans residues 1260–1315 (GHEFIPTLYHFPTNCEACMKPLWHMFKPPPALECSRCHIKCHKDHMDKKEEIIAPC). The tract at residues 1345–1388 (VKKIPKKPPAPDPFARSSPRTSMKIQQNQSIRRPSRQLAPNKPS) is disordered. Phosphoserine occurs at positions 1362 and 1374. The segment covering 1362 to 1376 (SPRTSMKIQQNQSIR) has biased composition (polar residues).

Belongs to the protein kinase superfamily. AGC Ser/Thr protein kinase family. In terms of assembly, homodimer. Interacts with IRS1. Interacts with RAF1. Interacts with RHOA (activated by GTP), RHOB, RHOC. Interacts with PPP1R12A. Interacts with EP300. Interacts with CHORDC1. Interacts with BRCA2. Interacts with NPM1; this interaction enhances its activity. Interacts with SORL1. Interacts with PJVK. The cofactor is Mg(2+). Post-translationally, autophosphorylated. Phosphorylation at Tyr-722 reduces its binding to RHOA and is crucial for focal adhesion dynamics. Dephosphorylation by PTPN11 stimulates its RHOA binding activity. Cleaved by granzyme B during apoptosis. This leads to constitutive activation of the kinase and membrane blebbing. In terms of tissue distribution, highly expressed in brain, lung, liver, skeletal muscle, kidney and testis.

The protein localises to the cytoplasm. It is found in the cell membrane. The protein resides in the nucleus. It localises to the cytoskeleton. Its subcellular location is the microtubule organizing center. The protein localises to the centrosome. It carries out the reaction L-seryl-[protein] + ATP = O-phospho-L-seryl-[protein] + ADP + H(+). The catalysed reaction is L-threonyl-[protein] + ATP = O-phospho-L-threonyl-[protein] + ADP + H(+). Activated by RHOA binding. Inhibited by Y-27632. Protein kinase which is a key regulator of actin cytoskeleton and cell polarity. Involved in regulation of smooth muscle contraction, actin cytoskeleton organization, stress fiber and focal adhesion formation, neurite retraction, cell adhesion and motility via phosphorylation of ADD1, BRCA2, CNN1, EZR, DPYSL2, EP300, MSN, MYL9/MLC2, NPM1, RDX, PPP1R12A and VIM. Phosphorylates SORL1 and IRF4. Acts as a negative regulator of VEGF-induced angiogenic endothelial cell activation. Positively regulates the activation of p42/MAPK1-p44/MAPK3 and of p90RSK/RPS6KA1 during myogenic differentiation. Plays an important role in the timely initiation of centrosome duplication. Inhibits keratinocyte terminal differentiation. May regulate closure of the eyelids and ventral body wall through organization of actomyosin bundles. Plays a critical role in the regulation of spine and synaptic properties in the hippocampus. Plays a role in placental homeostasis during the perinatal period. Plays an important role in generating the circadian rhythm of the aortic myofilament Ca(2+) sensitivity and vascular contractility by modulating the myosin light chain phosphorylation. The polypeptide is Rho-associated protein kinase 2 (Rock2) (Rattus norvegicus (Rat)).